We begin with the raw amino-acid sequence, 82 residues long: UPF0335 protein pRhico085 (82 aa).

The protein belongs to the UPF0335 family.

In Azospirillum brasilense, this protein is UPF0335 protein pRhico085.